A 76-amino-acid polypeptide reads, in one-letter code: Zinc finger protein 706 (76 aa).

The span at 1–13 shows a compositional bias: low complexity; that stretch reads MARGQQKIQSQQK. Disordered stretches follow at residues 1–32 and 53–76; these read MARG…QKAA and TFKQ…DVQA. 2 stretches are compositionally biased toward basic and acidic residues: residues 17–31 and 53–62; these read KQAE…DQKA and TFKQHFESKH. A C2H2-type zinc finger spans residues 39–62; it reads YTCTVCRTQMPDPKTFKQHFESKH.

The protein resides in the cytoplasm. It is found in the nucleus. In terms of biological role, transcription repressor involved in the exit of embryonic stem cells (ESCs) from self-renewal. This Gallus gallus (Chicken) protein is Zinc finger protein 706.